The chain runs to 156 residues: Protein CROC-4 (156 aa).

A disordered region spans residues 46–71; it reads RATSSTTDSSRAPSSPRPPGSTSHCG. The span at 48–59 shows a compositional bias: low complexity; that stretch reads TSSTTDSSRAPS.

Expressed throughout the brain in the thalamus, subthalamic nucleus, corpus callosum, hippocampus, substantia nigra, caudate nucleus, and amygdala.

It is found in the nucleus. In terms of biological role, may play a role in FOS signaling pathways involved in development and remodeling of neurons. Promotes transcription of the FOS promoter. The sequence is that of Protein CROC-4 from Homo sapiens (Human).